We begin with the raw amino-acid sequence, 59 residues long: uncharacterized protein (59 aa).

This is an uncharacterized protein from Saccharomyces cerevisiae (strain ATCC 204508 / S288c) (Baker's yeast).